A 600-amino-acid chain; its full sequence is Elongation factor 4 (600 aa).

One can recognise a tr-type G domain in the interval 6–188; the sequence is QFIRNFSIIA…QITKQIPSPK (183 aa). GTP is bound by residues 18–23 and 135–138; these read DHGKST and NKID.

Belongs to the TRAFAC class translation factor GTPase superfamily. Classic translation factor GTPase family. LepA subfamily.

It localises to the cell inner membrane. It catalyses the reaction GTP + H2O = GDP + phosphate + H(+). Its function is as follows. Required for accurate and efficient protein synthesis under certain stress conditions. May act as a fidelity factor of the translation reaction, by catalyzing a one-codon backward translocation of tRNAs on improperly translocated ribosomes. Back-translocation proceeds from a post-translocation (POST) complex to a pre-translocation (PRE) complex, thus giving elongation factor G a second chance to translocate the tRNAs correctly. Binds to ribosomes in a GTP-dependent manner. The sequence is that of Elongation factor 4 from Leptospira interrogans serogroup Icterohaemorrhagiae serovar copenhageni (strain Fiocruz L1-130).